Consider the following 298-residue polypeptide: Protoheme IX farnesyltransferase (298 aa).

9 helical membrane passes run Val16 to Pro36, Ala45 to Leu65, Val93 to Ile113, Thr114 to Lys134, Ile141 to Gly161, Ser172 to Phe192, Val223 to Leu243, Gly244 to Pro264, and Ile277 to Val297.

It belongs to the UbiA prenyltransferase family. Protoheme IX farnesyltransferase subfamily.

It is found in the cell inner membrane. It carries out the reaction heme b + (2E,6E)-farnesyl diphosphate + H2O = Fe(II)-heme o + diphosphate. It participates in porphyrin-containing compound metabolism; heme O biosynthesis; heme O from protoheme: step 1/1. In terms of biological role, converts heme B (protoheme IX) to heme O by substitution of the vinyl group on carbon 2 of heme B porphyrin ring with a hydroxyethyl farnesyl side group. The sequence is that of Protoheme IX farnesyltransferase from Xanthomonas oryzae pv. oryzae (strain MAFF 311018).